Reading from the N-terminus, the 71-residue chain is Exodeoxyribonuclease 7 small subunit (71 aa).

This sequence belongs to the XseB family. In terms of assembly, heterooligomer composed of large and small subunits.

Its subcellular location is the cytoplasm. It catalyses the reaction Exonucleolytic cleavage in either 5'- to 3'- or 3'- to 5'-direction to yield nucleoside 5'-phosphates.. Bidirectionally degrades single-stranded DNA into large acid-insoluble oligonucleotides, which are then degraded further into small acid-soluble oligonucleotides. The polypeptide is Exodeoxyribonuclease 7 small subunit (Clostridium botulinum (strain Kyoto / Type A2)).